A 393-amino-acid chain; its full sequence is S-adenosylmethionine synthase (393 aa).

H17 is an ATP binding site. Residue D19 coordinates Mg(2+). E45 is a K(+) binding site. The L-methionine site is built by E58 and Q106. Residues Q106 to A116 form a flexible loop region. ATP contacts are provided by residues D171 to K173, K237 to F238, D246, R252 to K253, A269, and K273. D246 is an L-methionine binding site. Residue K277 coordinates L-methionine.

Belongs to the AdoMet synthase family. Homotetramer; dimer of dimers. The cofactor is Mg(2+). It depends on K(+) as a cofactor.

It is found in the cytoplasm. The enzyme catalyses L-methionine + ATP + H2O = S-adenosyl-L-methionine + phosphate + diphosphate. It participates in amino-acid biosynthesis; S-adenosyl-L-methionine biosynthesis; S-adenosyl-L-methionine from L-methionine: step 1/1. Its function is as follows. Catalyzes the formation of S-adenosylmethionine (AdoMet) from methionine and ATP. The overall synthetic reaction is composed of two sequential steps, AdoMet formation and the subsequent tripolyphosphate hydrolysis which occurs prior to release of AdoMet from the enzyme. This chain is S-adenosylmethionine synthase, found in Ruegeria pomeroyi (strain ATCC 700808 / DSM 15171 / DSS-3) (Silicibacter pomeroyi).